Reading from the N-terminus, the 314-residue chain is tRNA uridine(34) hydroxylase (314 aa).

The Rhodanese domain maps to 140–234 (ARDDVILIDT…YLEETPPDES (95 aa)). Cysteine 194 acts as the Cysteine persulfide intermediate in catalysis.

This sequence belongs to the TrhO family.

The enzyme catalyses uridine(34) in tRNA + AH2 + O2 = 5-hydroxyuridine(34) in tRNA + A + H2O. Catalyzes oxygen-dependent 5-hydroxyuridine (ho5U) modification at position 34 in tRNAs. This is tRNA uridine(34) hydroxylase from Acinetobacter baumannii (strain SDF).